The primary structure comprises 340 residues: Fructose-1,6-bisphosphatase class 1 (340 aa).

Mg(2+)-binding residues include Glu107, Asp126, Leu128, and Asp129. Asn215 lines the substrate pocket. Glu287 serves as a coordination point for Mg(2+).

Belongs to the FBPase class 1 family. As to quaternary structure, homotetramer. Requires Mg(2+) as cofactor.

It localises to the cytoplasm. The enzyme catalyses beta-D-fructose 1,6-bisphosphate + H2O = beta-D-fructose 6-phosphate + phosphate. It functions in the pathway carbohydrate biosynthesis; gluconeogenesis. In Brucella suis biovar 1 (strain 1330), this protein is Fructose-1,6-bisphosphatase class 1.